A 613-amino-acid polypeptide reads, in one-letter code: MVRMTKNVLVSVAWPYANGPRHIGHVAGFGVPSDVFARFQRMRGNNVLMVSGTDEHGTPLLVQADKEGVSVQELADKYNRQIVEDLTGLGLSYDLFTRTTTSNHYAVVQELFRGLHDNGYMIKETTLGAISPSTGRTLPDRYIEGTCPICHADGARGDQCDNCGNQLDPADLINPVSKINGETPEFVETEHFLLDLPALADSLTAWLKGREDWRPNVLKFSLNLLEDIRPRAMTRDIDWGIPIPVEGWQDNNAKKLYVWFDAVVGYLSASIEWAWRTGDPEAWRTFWNDPETSSYYFMGKDNITFHSQIWPAELLGYAGRGSRGGEVGDLGELNLPTEVVSSEFLTMSGSKFSSSKGVVIYVKDFLAEFGPDPLRYFIAVAGPENNDTDFTWDEFVRRVNNELANGWGNLVNRTVSMAHKNFGEVPVPSALTDSDQRILDLAASTFDSAGADLELSKFKNAITQIMHVVGEANAYIAEQEPWKLAKDETQRERLATVLWTALQVVSDCNTMLTPYLPHTAQKVHETLGREGIWAASPQIVEVTNESPRQPVGVGLPDPEHTYPVIMGDYQAQAAKWERIDMVPGTPLNKPAPLVTKLDPELGETGPEWAPVQS.

Residues proline 15 to histidine 25 carry the 'HIGH' region motif. The Zn(2+) site is built by cysteine 147, cysteine 150, cysteine 160, and cysteine 163. The 'KMSKS' region signature appears at lysine 351 to serine 355. Position 354 (serine 354) interacts with ATP.

This sequence belongs to the class-I aminoacyl-tRNA synthetase family. MetG type 1 subfamily. In terms of assembly, monomer. Zn(2+) serves as cofactor.

The protein localises to the cytoplasm. The enzyme catalyses tRNA(Met) + L-methionine + ATP = L-methionyl-tRNA(Met) + AMP + diphosphate. In terms of biological role, is required not only for elongation of protein synthesis but also for the initiation of all mRNA translation through initiator tRNA(fMet) aminoacylation. The sequence is that of Methionine--tRNA ligase from Corynebacterium efficiens (strain DSM 44549 / YS-314 / AJ 12310 / JCM 11189 / NBRC 100395).